The primary structure comprises 550 residues: Hydroxylamine reductase (550 aa).

[2Fe-2S] cluster-binding residues include cysteine 3, cysteine 6, cysteine 18, and cysteine 25. Hybrid [4Fe-2O-2S] cluster-binding residues include histidine 249, glutamate 273, cysteine 317, cysteine 405, cysteine 433, cysteine 458, glutamate 492, and lysine 494. A Cysteine persulfide modification is found at cysteine 405.

This sequence belongs to the HCP family. Requires [2Fe-2S] cluster as cofactor. Hybrid [4Fe-2O-2S] cluster is required as a cofactor.

It is found in the cytoplasm. It catalyses the reaction A + NH4(+) + H2O = hydroxylamine + AH2 + H(+). Its function is as follows. Catalyzes the reduction of hydroxylamine to form NH(3) and H(2)O. In Pectobacterium carotovorum subsp. carotovorum (strain PC1), this protein is Hydroxylamine reductase.